A 396-amino-acid chain; its full sequence is Tryptophan synthase beta chain (396 aa).

Residue K86 is modified to N6-(pyridoxal phosphate)lysine.

This sequence belongs to the TrpB family. As to quaternary structure, tetramer of two alpha and two beta chains. It depends on pyridoxal 5'-phosphate as a cofactor.

The enzyme catalyses (1S,2R)-1-C-(indol-3-yl)glycerol 3-phosphate + L-serine = D-glyceraldehyde 3-phosphate + L-tryptophan + H2O. The protein operates within amino-acid biosynthesis; L-tryptophan biosynthesis; L-tryptophan from chorismate: step 5/5. Functionally, the beta subunit is responsible for the synthesis of L-tryptophan from indole and L-serine. This Vibrio vulnificus (strain CMCP6) protein is Tryptophan synthase beta chain.